The following is a 214-amino-acid chain: Cytochrome b (214 aa).

The next 4 helical transmembrane spans lie at 31–51 (FGSM…FLAI), 75–96 (WIMQ…YTHI), 111–131 (WLSG…GYVL), and 176–196 (FFAL…IHII). Residues His-81 and His-95 each coordinate heme b. Heme b-binding residues include His-180 and His-194. His-199 provides a ligand contact to a ubiquinone.

The protein belongs to the cytochrome b family. As to quaternary structure, the cytochrome bc1 complex contains 3 respiratory subunits (MT-CYB, CYC1 and UQCRFS1), 2 core proteins (UQCRC1 and UQCRC2) and probably 6 low-molecular weight proteins. Requires heme b as cofactor.

It is found in the mitochondrion inner membrane. In terms of biological role, component of the ubiquinol-cytochrome c reductase complex (complex III or cytochrome b-c1 complex) that is part of the mitochondrial respiratory chain. The b-c1 complex mediates electron transfer from ubiquinol to cytochrome c. Contributes to the generation of a proton gradient across the mitochondrial membrane that is then used for ATP synthesis. The protein is Cytochrome b (MT-CYB) of Cerastes cerastes (Horned desert viper).